The primary structure comprises 238 residues: Orotidine 5'-phosphate decarboxylase (238 aa).

Substrate contacts are provided by residues aspartate 10, lysine 32, 59–68, threonine 122, arginine 184, glutamine 193, glycine 213, and arginine 214; that span reads DLKLHDIPNT. Residue lysine 61 is the Proton donor of the active site.

This sequence belongs to the OMP decarboxylase family. Type 1 subfamily. In terms of assembly, homodimer.

The enzyme catalyses orotidine 5'-phosphate + H(+) = UMP + CO2. It functions in the pathway pyrimidine metabolism; UMP biosynthesis via de novo pathway; UMP from orotate: step 2/2. Functionally, catalyzes the decarboxylation of orotidine 5'-monophosphate (OMP) to uridine 5'-monophosphate (UMP). The sequence is that of Orotidine 5'-phosphate decarboxylase from Bacillus anthracis (strain A0248).